Here is a 475-residue protein sequence, read N- to C-terminus: Bifunctional protein HldE (475 aa).

Residues 1 to 320 form a ribokinase region; the sequence is MNSSYLNFKD…AIMFQRSHNT (320 aa). An ATP-binding site is contributed by 196 to 199; the sequence is NLLE. The active site involves aspartate 265. The tract at residues 346 to 475 is cytidylyltransferase; the sequence is FTNGCFDILH…TTSIIEKANL (130 aa).

This sequence in the N-terminal section; belongs to the carbohydrate kinase PfkB family. In the C-terminal section; belongs to the cytidylyltransferase family. Homodimer.

The catalysed reaction is D-glycero-beta-D-manno-heptose 7-phosphate + ATP = D-glycero-beta-D-manno-heptose 1,7-bisphosphate + ADP + H(+). It carries out the reaction D-glycero-beta-D-manno-heptose 1-phosphate + ATP + H(+) = ADP-D-glycero-beta-D-manno-heptose + diphosphate. Its pathway is nucleotide-sugar biosynthesis; ADP-L-glycero-beta-D-manno-heptose biosynthesis; ADP-L-glycero-beta-D-manno-heptose from D-glycero-beta-D-manno-heptose 7-phosphate: step 1/4. It functions in the pathway nucleotide-sugar biosynthesis; ADP-L-glycero-beta-D-manno-heptose biosynthesis; ADP-L-glycero-beta-D-manno-heptose from D-glycero-beta-D-manno-heptose 7-phosphate: step 3/4. Catalyzes the phosphorylation of D-glycero-D-manno-heptose 7-phosphate at the C-1 position to selectively form D-glycero-beta-D-manno-heptose-1,7-bisphosphate. Its function is as follows. Catalyzes the ADP transfer from ATP to D-glycero-beta-D-manno-heptose 1-phosphate, yielding ADP-D-glycero-beta-D-manno-heptose. This is Bifunctional protein HldE from Marinomonas sp. (strain MWYL1).